Reading from the N-terminus, the 253-residue chain is Molybdate import ATP-binding protein MolC (253 aa).

In terms of domain architecture, ABC transporter spans 5-229; it reads LSVENLGFYY…NLTALFHLPM (225 aa). 38-45 lines the ATP pocket; that stretch reads GQNGCGKS.

It belongs to the ABC transporter superfamily. The complex is composed of two ATP-binding proteins (MolC), two transmembrane proteins (MolB) and a solute-binding protein (MolA).

It is found in the cell inner membrane. It carries out the reaction molybdate(out) + ATP + H2O = molybdate(in) + ADP + phosphate + H(+). With respect to regulation, the MolBCA complex shows a decrease in affinity in the presence of increasing concentrations of substrate and nucleotide. Its function is as follows. Part of the ABC transporter complex MolBCA involved in molybdate import. Responsible for energy coupling to the transport system. Functions as a low-affinity molybdate transporter. This chain is Molybdate import ATP-binding protein MolC, found in Haemophilus influenzae (strain ATCC 51907 / DSM 11121 / KW20 / Rd).